Consider the following 72-residue polypeptide: Prophage late control protein OgrK (72 aa).

Its function is as follows. Cryptic version of the phage P2 OGR protein which acts as an activator of P2 late transcription. The sequence is that of Prophage late control protein OgrK (ogrK) from Escherichia coli (strain K12).